A 124-amino-acid polypeptide reads, in one-letter code: Large ribosomal subunit protein bL12 (124 aa).

This sequence belongs to the bacterial ribosomal protein bL12 family. As to quaternary structure, homodimer. Part of the ribosomal stalk of the 50S ribosomal subunit. Forms a multimeric L10(L12)X complex, where L10 forms an elongated spine to which 2 to 4 L12 dimers bind in a sequential fashion. Binds GTP-bound translation factors.

In terms of biological role, forms part of the ribosomal stalk which helps the ribosome interact with GTP-bound translation factors. Is thus essential for accurate translation. The sequence is that of Large ribosomal subunit protein bL12 from Cupriavidus metallidurans (strain ATCC 43123 / DSM 2839 / NBRC 102507 / CH34) (Ralstonia metallidurans).